A 154-amino-acid chain; its full sequence is MGLSDGEWQLVLNVWGKVEADLAGHGQEVLIGLFKTHPETLDKFDKFKNLKSEEDMKGSEDLKKHGCTVLTALGTILKKKGQHAAEIQPLAQSHATKHKIPVKYLEFISEIIIEVLKKRHSGDFGADAQGAMSKALELFRNDIAAKYKELGFQG.

The 147-residue stretch at G2–K148 folds into the Globin domain. S4 is subject to Phosphoserine. Position 65 (H65) interacts with nitrite. H65 contacts O2. 2 positions are modified to phosphothreonine: T68 and T75. H94 is a heme b binding site. S121 is subject to Phosphoserine.

The protein belongs to the globin family. In terms of assembly, monomeric.

Its subcellular location is the cytoplasm. It localises to the sarcoplasm. It carries out the reaction Fe(III)-heme b-[protein] + nitric oxide + H2O = Fe(II)-heme b-[protein] + nitrite + 2 H(+). The enzyme catalyses H2O2 + AH2 = A + 2 H2O. Functionally, monomeric heme protein which primary function is to store oxygen and facilitate its diffusion within muscle tissues. Reversibly binds oxygen through a pentacoordinated heme iron and enables its timely and efficient release as needed during periods of heightened demand. Depending on the oxidative conditions of tissues and cells, and in addition to its ability to bind oxygen, it also has a nitrite reductase activity whereby it regulates the production of bioactive nitric oxide. Under stress conditions, like hypoxia and anoxia, it also protects cells against reactive oxygen species thanks to its pseudoperoxidase activity. This is Myoglobin from Mus musculus (Mouse).